We begin with the raw amino-acid sequence, 120 residues long: NAD(P)H-quinone oxidoreductase subunit 3, chloroplastic (120 aa).

3 helical membrane-spanning segments follow: residues 9–29, 64–84, and 88–108; these read IFWAFLIISSVIPILAFLISG, MFALVFVVFDVETVFLYPWAM, and VLGVSVFVEALIFVLILIVGL.

It belongs to the complex I subunit 3 family. As to quaternary structure, NDH is composed of at least 16 different subunits, 5 of which are encoded in the nucleus.

It is found in the plastid. The protein localises to the chloroplast thylakoid membrane. It carries out the reaction a plastoquinone + NADH + (n+1) H(+)(in) = a plastoquinol + NAD(+) + n H(+)(out). It catalyses the reaction a plastoquinone + NADPH + (n+1) H(+)(in) = a plastoquinol + NADP(+) + n H(+)(out). Functionally, NDH shuttles electrons from NAD(P)H:plastoquinone, via FMN and iron-sulfur (Fe-S) centers, to quinones in the photosynthetic chain and possibly in a chloroplast respiratory chain. The immediate electron acceptor for the enzyme in this species is believed to be plastoquinone. Couples the redox reaction to proton translocation, and thus conserves the redox energy in a proton gradient. This is NAD(P)H-quinone oxidoreductase subunit 3, chloroplastic from Ranunculus macranthus (Large buttercup).